A 23-amino-acid chain; its full sequence is Defensin D4 (23 aa).

The protein belongs to the DEFL family. Group IV subfamily. Distributed in the epidermal cell layer of leaves and in the subepidermal layer region of stems. Not in roots.

It localises to the secreted. The protein resides in the cell wall. Its function is as follows. Antimicrobial peptide. Active against Fusarium spp., Gram-positive and Gram-negative bacterial pathogens. In Spinacia oleracea (Spinach), this protein is Defensin D4.